A 590-amino-acid chain; its full sequence is Arginine--tRNA ligase (590 aa).

The 'HIGH' region motif lies at 130–140 (PNIAKEMHVGH).

Belongs to the class-I aminoacyl-tRNA synthetase family. In terms of assembly, monomer.

The protein resides in the cytoplasm. The catalysed reaction is tRNA(Arg) + L-arginine + ATP = L-arginyl-tRNA(Arg) + AMP + diphosphate. The sequence is that of Arginine--tRNA ligase from Synechococcus sp. (strain CC9605).